We begin with the raw amino-acid sequence, 385 residues long: 1-deoxy-D-xylulose 5-phosphate reductoisomerase (385 aa).

5 residues coordinate NADPH: threonine 10, glycine 11, serine 12, isoleucine 13, and asparagine 124. Lysine 125 is a 1-deoxy-D-xylulose 5-phosphate binding site. Glutamate 126 lines the NADPH pocket. Aspartate 150 is a binding site for Mn(2+). Positions 151, 152, 176, and 199 each coordinate 1-deoxy-D-xylulose 5-phosphate. Glutamate 152 contributes to the Mn(2+) binding site. Residue glycine 205 participates in NADPH binding. The 1-deoxy-D-xylulose 5-phosphate site is built by serine 212, asparagine 217, lysine 218, and glutamate 221. Glutamate 221 contacts Mn(2+).

It belongs to the DXR family. Mg(2+) serves as cofactor. Mn(2+) is required as a cofactor.

The catalysed reaction is 2-C-methyl-D-erythritol 4-phosphate + NADP(+) = 1-deoxy-D-xylulose 5-phosphate + NADPH + H(+). The protein operates within isoprenoid biosynthesis; isopentenyl diphosphate biosynthesis via DXP pathway; isopentenyl diphosphate from 1-deoxy-D-xylulose 5-phosphate: step 1/6. In terms of biological role, catalyzes the NADPH-dependent rearrangement and reduction of 1-deoxy-D-xylulose-5-phosphate (DXP) to 2-C-methyl-D-erythritol 4-phosphate (MEP). This chain is 1-deoxy-D-xylulose 5-phosphate reductoisomerase, found in Clostridium botulinum (strain Alaska E43 / Type E3).